We begin with the raw amino-acid sequence, 438 residues long: 23S rRNA (uracil(1939)-C(5))-methyltransferase RlmD (438 aa).

The TRAM domain maps to 13–71 (KAPLGPMQTYLVEGLTHEAKGVARLNGKVTFIEGALPGETVTAQVNKPGRRFDEAVLNA). [4Fe-4S] cluster-binding residues include C84, C90, C93, and C167. S-adenosyl-L-methionine-binding residues include Q271, F300, N305, E321, D348, and D368. The active-site Nucleophile is C394.

The protein belongs to the class I-like SAM-binding methyltransferase superfamily. RNA M5U methyltransferase family. RlmD subfamily.

It catalyses the reaction uridine(1939) in 23S rRNA + S-adenosyl-L-methionine = 5-methyluridine(1939) in 23S rRNA + S-adenosyl-L-homocysteine + H(+). Catalyzes the formation of 5-methyl-uridine at position 1939 (m5U1939) in 23S rRNA. This is 23S rRNA (uracil(1939)-C(5))-methyltransferase RlmD from Marinomonas posidonica (strain CECT 7376 / NCIMB 14433 / IVIA-Po-181).